Here is a 160-residue protein sequence, read N- to C-terminus: Cytochrome b6-f complex subunit 4 (160 aa).

A run of 3 helical transmembrane segments spans residues 36–56 (LLYI…GLAV), 95–115 (LLGV…PFLE), and 131–151 (TVFL…TLPI).

It belongs to the cytochrome b family. PetD subfamily. In terms of assembly, the 4 large subunits of the cytochrome b6-f complex are cytochrome b6, subunit IV (17 kDa polypeptide, petD), cytochrome f and the Rieske protein, while the 4 small subunits are petG, petL, petM and petN. The complex functions as a dimer.

It localises to the plastid. Its subcellular location is the chloroplast thylakoid membrane. Functionally, component of the cytochrome b6-f complex, which mediates electron transfer between photosystem II (PSII) and photosystem I (PSI), cyclic electron flow around PSI, and state transitions. The chain is Cytochrome b6-f complex subunit 4 from Coffea arabica (Arabian coffee).